The sequence spans 178 residues: Ribosome maturation factor RimP (178 aa).

This sequence belongs to the RimP family.

It is found in the cytoplasm. Functionally, required for maturation of 30S ribosomal subunits. This Streptococcus pyogenes serotype M1 protein is Ribosome maturation factor RimP.